The following is a 72-amino-acid chain: uncharacterized protein (72 aa).

A coiled-coil region spans residues 27–55 (YTQNLINELQEARDSINDLQRAHERLKLV).

This is an uncharacterized protein from Schizosaccharomyces pombe (strain 972 / ATCC 24843) (Fission yeast).